A 213-amino-acid polypeptide reads, in one-letter code: Adenylate kinase (213 aa).

10-15 is a binding site for ATP; sequence GSGKGT. Residues 30 to 59 form an NMP region; the sequence is SVGDLLRNIISSESKLGKGIKDTVESGNLI. AMP contacts are provided by residues Arg36, 57 to 59, 83 to 86, and Gln90; these read NLI and GFPR. The segment at 125–160 is LID; the sequence is DRLTCLDCKSIYSISSFKNTTCAKCKSTRLEKRIDD. ATP is bound at residue Arg126. Zn(2+) contacts are provided by Cys129 and Cys132. 135-136 lines the ATP pocket; that stretch reads IY. Zn(2+) is bound by residues Cys146 and Cys149. AMP contacts are provided by Arg157 and Arg169. Position 195 (Leu195) interacts with ATP.

This sequence belongs to the adenylate kinase family. As to quaternary structure, monomer.

The protein resides in the cytoplasm. The catalysed reaction is AMP + ATP = 2 ADP. It functions in the pathway purine metabolism; AMP biosynthesis via salvage pathway; AMP from ADP: step 1/1. Catalyzes the reversible transfer of the terminal phosphate group between ATP and AMP. Plays an important role in cellular energy homeostasis and in adenine nucleotide metabolism. The protein is Adenylate kinase of Wolbachia pipientis subsp. Culex pipiens (strain wPip).